Reading from the N-terminus, the 255-residue chain is Small ribosomal subunit protein uS2 (255 aa).

The interval 226 to 255 (QGVSNEEVAAEQNIDLDEKEKSEETEATEE) is disordered.

Belongs to the universal ribosomal protein uS2 family.

This Staphylococcus aureus (strain JH1) protein is Small ribosomal subunit protein uS2.